A 440-amino-acid polypeptide reads, in one-letter code: Syntrophin-1 (440 aa).

2 PH domains span residues 2 to 208 (AAVR…ACTT) and 227 to 340 (QVRH…IGGY). One can recognise a PDZ domain in the interval 45–128 (TVRVVKYDGN…VVDLQVQYRR (84 aa)). An SU domain is found at 384–440 (SFETIRATGDDGGRFLWVDFGPPHGEQELDLLNSAKPVVFILHSFLATKVYRLGLYA).

This sequence belongs to the syntrophin family. Component of the dystrophin glycoprotein complex (DGC). Interacts with dyb-1, dys-1 and snf-6 to form the DGC. As to expression, expressed in neurons and muscles; particularly strong expression in the body wall, head and vulval muscles, and in ventral nerve cord (at protein level).

It is found in the membrane. Its subcellular location is the cytoplasm. It localises to the cytoskeleton. Functionally, adapter protein that binds to and probably organizes the subcellular localization of a variety of membrane proteins. May link various receptors to the actin cytoskeleton and the dystrophin glycoprotein complex (DGC). May also act by slowing calcium channel activity via a direct or indirect mechanism potentially involving other second messengers. Plays an early role in the formation of the neuromuscular junction and is necessary for muscle maintenance. This Caenorhabditis elegans protein is Syntrophin-1.